The following is a 277-amino-acid chain: Protein CIMAP1D (277 aa).

STPGR repeat units follow at residues 122–148 (PGPG…LGSR), 202–227 (PGPG…ILGR), and 238–263 (PGPG…MGIR). A disordered region spans residues 181 to 277 (PSYTVVGRTP…ASTMVGDTKC (97 aa)).

It belongs to the CIMAP family.

The protein is Protein CIMAP1D (Cimap1d) of Mus musculus (Mouse).